Reading from the N-terminus, the 360-residue chain is Peptide chain release factor 1 (360 aa).

At glutamine 234 the chain carries N5-methylglutamine.

It belongs to the prokaryotic/mitochondrial release factor family. In terms of processing, methylated by PrmC. Methylation increases the termination efficiency of RF1.

It localises to the cytoplasm. In terms of biological role, peptide chain release factor 1 directs the termination of translation in response to the peptide chain termination codons UAG and UAA. This Renibacterium salmoninarum (strain ATCC 33209 / DSM 20767 / JCM 11484 / NBRC 15589 / NCIMB 2235) protein is Peptide chain release factor 1.